The following is a 163-amino-acid chain: Small ribosomal subunit protein uS5 (163 aa).

An S5 DRBM domain is found at 8–71 (LIEKIVDLNR…ERAKKGMVQV (64 aa)).

Belongs to the universal ribosomal protein uS5 family. As to quaternary structure, part of the 30S ribosomal subunit. Contacts proteins S4 and S8.

Functionally, with S4 and S12 plays an important role in translational accuracy. In terms of biological role, located at the back of the 30S subunit body where it stabilizes the conformation of the head with respect to the body. The polypeptide is Small ribosomal subunit protein uS5 (Oleidesulfovibrio alaskensis (strain ATCC BAA-1058 / DSM 17464 / G20) (Desulfovibrio alaskensis)).